Here is a 489-residue protein sequence, read N- to C-terminus: Endoglucanase 4 (489 aa).

An N-terminal signal peptide occupies residues 1-25 (MAGKSFMTPAIMLAMLLLISPETYA). The Nucleophile role is filled by D81. Residue H409 is part of the active site. The N-linked (GlcNAc...) asparagine glycan is linked to N453. Catalysis depends on residues D460 and E469.

It belongs to the glycosyl hydrolase 9 (cellulase E) family.

It is found in the secreted. It carries out the reaction Endohydrolysis of (1-&gt;4)-beta-D-glucosidic linkages in cellulose, lichenin and cereal beta-D-glucans.. This is Endoglucanase 4 from Arabidopsis thaliana (Mouse-ear cress).